A 455-amino-acid chain; its full sequence is Growth/differentiation factor 6 (455 aa).

An N-terminal signal peptide occupies residues 1–22 (MDTPRVLLSAVFLISFLWDLPG). Positions 23–335 (FQQASISSSS…LPSPGRRRRR (313 aa)) are excised as a propeptide. Residues 29-93 (SSSSSSAELG…EPPGRGPRVV (65 aa)) are disordered. Basic and acidic residues predominate over residues 45-76 (SRKEGKMQRAPRDSDAGREGQEPQPRPQDEPR). The segment covering 77–91 (AQQPRAQEPPGRGPR) has biased composition (low complexity). N-linked (GlcNAc...) asparagine glycosylation occurs at N114. Disordered regions lie at residues 244-267 (EAEARARGPQQPPPPDLRSLGFGR) and 300-351 (AEAA…KKSR). The span at 330-351 (GRRRRRTAFASRHGKRHGKKSR) shows a compositional bias: basic residues. Intrachain disulfides connect C354–C420, C383–C452, and C387–C454.

It belongs to the TGF-beta family. As to quaternary structure, homodimer; disulfide-linked.

It is found in the secreted. Growth factor that controls proliferation and cellular differentiation in the retina and bone formation. Plays a key role in regulating apoptosis during retinal development. Establishes dorsal-ventral positional information in the retina and controls the formation of the retinotectal map. Required for normal formation of bones and joints in the limbs, skull, digits and axial skeleton. Plays a key role in establishing boundaries between skeletal elements during development. Regulation of GDF6 expression seems to be a mechanism for evolving species-specific changes in skeletal structures. Seems to positively regulate differentiation of chondrogenic tissue through the growth factor receptors subunits BMPR1A, BMPR1B, BMPR2 and ACVR2A, leading to the activation of SMAD1-SMAD5-SMAD8 complex. The regulation of chondrogenic differentiation is inhibited by NOG. Also involved in the induction of adipogenesis from mesenchymal stem cells. This mechanism acts through the growth factor receptors subunits BMPR1A, BMPR2 and ACVR2A and the activation of SMAD1-SMAD5-SMAD8 complex and MAPK14/p38. The polypeptide is Growth/differentiation factor 6 (GDF6) (Homo sapiens (Human)).